The following is a 358-amino-acid chain: MTQPQRVAVAMSGGVDSSATAALLVEQGYEVIGLTMQLWDHSSPKVAGSRSCCALDDLYDARQVAQTLGIPYYVVNYEADFRQAVVDDFIQTYAAGQTPNPCVRCNQILKFDLLLKKALALGADFLATGHYAIRREDAQGVPQLWQGSDPAKDQSYFLFTTTMAQLAHVRFPLGEMDKQQTRQLAQRFGLHLSTKQESQDVCFVPDGDYSAFFAKQAPHLLTPGAIVDQQGHSLGQHKGLGCYTVGQRKGLGIAHPTPLYVLALDAPHNQVIVGPAEALYQQQLTLHHVNWLEPTPPTEPFASMAKIRYAAPPVEARVEPLPDGGAQIYFNQPQRAITPGQACVFYDGARVVGGGWIV.

ATP is bound by residues 10–17 and M36; that span reads AMSGGVDS. Residue C105 is the Nucleophile of the active site. A disulfide bridge connects residues C105 and C202. Position 129 (G129) interacts with ATP. The tract at residues 152–154 is interaction with tRNA; sequence KDQ. The Cysteine persulfide intermediate role is filled by C202. The interaction with tRNA stretch occupies residues 308–309; the sequence is RY.

The protein belongs to the MnmA/TRMU family.

The protein localises to the cytoplasm. The catalysed reaction is S-sulfanyl-L-cysteinyl-[protein] + uridine(34) in tRNA + AH2 + ATP = 2-thiouridine(34) in tRNA + L-cysteinyl-[protein] + A + AMP + diphosphate + H(+). In terms of biological role, catalyzes the 2-thiolation of uridine at the wobble position (U34) of tRNA, leading to the formation of s(2)U34. This is tRNA-specific 2-thiouridylase MnmA from Magnetococcus marinus (strain ATCC BAA-1437 / JCM 17883 / MC-1).